The primary structure comprises 210 residues: Small ribosomal subunit protein bS6 (210 aa).

The segment at 99 to 210 is disordered; the sequence is PLPTKRNTKS…KDTKEVKEEG (112 aa). The span at 120 to 210 shows a compositional bias: basic and acidic residues; the sequence is NDTKEVKEAK…KDTKEVKEEG (91 aa).

It belongs to the bacterial ribosomal protein bS6 family.

Binds together with bS18 to 16S ribosomal RNA. The polypeptide is Small ribosomal subunit protein bS6 (Prochlorococcus marinus (strain SARG / CCMP1375 / SS120)).